A 238-amino-acid chain; its full sequence is CS1 fimbrial subunit B (238 aa).

The first 17 residues, 1-17 (MRKLFLSLLMIPFVAKA), serve as a signal peptide directing secretion.

The protein localises to the fimbrium. In terms of biological role, might function as a shuttle protein in the transport of fimbria through the periplasmic space or might function as an adhesin. The protein is CS1 fimbrial subunit B (csoB) of Escherichia coli.